A 608-amino-acid polypeptide reads, in one-letter code: Dextranase (608 aa).

The signal sequence occupies residues 1–19; that stretch reads MATMLKLLALTLAISESAI. A propeptide spanning residues 20-34 is cleaved from the precursor; the sequence is GAVMHPPGNSHPGTH. Residues Asn39, Asn571, and Asn574 are each glycosylated (N-linked (GlcNAc...) asparagine).

Belongs to the glycosyl hydrolase 49 family. Post-translationally, N-glycosylated.

It localises to the secreted. It carries out the reaction Endohydrolysis of (1-&gt;6)-alpha-D-glucosidic linkages in dextran.. This chain is Dextranase (DEX), found in Talaromyces minioluteus (Filamentous fungus).